Reading from the N-terminus, the 210-residue chain is uncharacterized protein (210 aa).

Transmembrane regions (helical) follow at residues 42 to 62 (ITLGIAFWGMLSMLGLAVLFV), 66 to 86 (ALHGVIMLLGGSYLAYLGFLM), 126 to 146 (VVVYFSSVMSLVLVNITEMWQ), 147 to 167 (IILAFAVIVVETFCYFYVISL), and 189 to 209 (AGIVFLFFGCVLVYNGINEII).

It belongs to the Rht family.

The protein localises to the cell membrane. This is an uncharacterized protein from Haemophilus influenzae (strain ATCC 51907 / DSM 11121 / KW20 / Rd).